A 352-amino-acid chain; its full sequence is Protein RecA (352 aa).

Residue 64–71 (GPESSGKT) participates in ATP binding. Residues 328–352 (NPSSVPEAEAEHDPEQDEEPTFDLE) form a disordered region. Acidic residues predominate over residues 335–352 (AEAEHDPEQDEEPTFDLE).

Belongs to the RecA family.

It is found in the cytoplasm. In terms of biological role, can catalyze the hydrolysis of ATP in the presence of single-stranded DNA, the ATP-dependent uptake of single-stranded DNA by duplex DNA, and the ATP-dependent hybridization of homologous single-stranded DNAs. It interacts with LexA causing its activation and leading to its autocatalytic cleavage. The sequence is that of Protein RecA from Brevibacillus brevis (strain 47 / JCM 6285 / NBRC 100599).